We begin with the raw amino-acid sequence, 435 residues long: uncharacterized protein (435 aa).

12 helical membrane passes run 26–46, 61–81, 96–116, 119–139, 150–170, 177–197, 242–262, 281–301, 325–345, 347–367, 385–405, and 407–427; these read LLSGIIILNYFDRVAISVAAP, IVFSIYTYSYTLMQLPVGSLL, IWSFLTILLAFLQGKLLLYLF, LIGLTSASAFPAASKATALWF, LFDSAAKFSNVIGAPLVAFLV, VAFLTIGCINVLFTIFFWQYY, VWGLMIGFTGYGYTFNLLLTW, FTAVPWLISTISGIAVGGWLV, FGFFFLGSILTNNITVAIICI, IGLAGISATAPVGWSISAELA, LFGGIIAASLTGYLFDVTGSF, and LSFLVAGFVLLLGLVFYVFVL.

It belongs to the major facilitator superfamily. Phthalate permease family.

The protein localises to the cell membrane. This is an uncharacterized protein from Bacillus subtilis (strain 168).